The following is a 1575-amino-acid chain: Laminin subunit gamma-3 (1575 aa).

The N-terminal stretch at 1–19 (MAAAALLLGLALLAPRAAG) is a signal peptide. The Laminin N-terminal domain occupies 31–270 (RPQRCLPVFE…AVSDFSVGGR (240 aa)). N-linked (GlcNAc...) asparagine glycosylation is found at Asn87 and Asn119. Cystine bridges form between Cys271-Cys280, Cys273-Cys290, Cys292-Cys301, Cys304-Cys324, Cys327-Cys336, Cys329-Cys352, Cys355-Cys364, Cys367-Cys380, Cys383-Cys395, Cys385-Cys401, Cys403-Cys412, Cys415-Cys427, Cys430-Cys441, Cys432-Cys448, Cys450-Cys459, and Cys462-Cys477. Laminin EGF-like domains lie at 271–326 (CKCN…ECLP), 327–382 (CNCS…PCQP), 383–429 (CDCQ…GCRP), and 430–479 (CTCN…GCSS). Asn295 is a glycosylation site (N-linked (GlcNAc...) asparagine). An N-linked (GlcNAc...) asparagine glycan is attached at Asn328. Positions 480–489 (CFCYGHSKVC) constitute a Laminin EGF-like 5; first part domain. The region spanning 499–672 (HILSDFHQGA…LSPPASWVEI (174 aa)) is the Laminin IV type A domain. Asn631 carries an N-linked (GlcNAc...) asparagine glycan. The Laminin EGF-like 5; second part domain occupies 673–706 (CSCPTGYTGQFCESCAPGYKREMPQGGPYASCVP). Cystine bridges form between Cys707/Cys715, Cys709/Cys722, Cys724/Cys733, Cys736/Cys752, Cys755/Cys763, Cys757/Cys774, Cys777/Cys786, Cys789/Cys807, Cys810/Cys824, Cys812/Cys831, Cys834/Cys843, Cys846/Cys863, Cys866/Cys880, Cys868/Cys887, Cys889/Cys898, Cys901/Cys914, Cys917/Cys929, Cys919/Cys936, Cys938/Cys947, Cys950/Cys962, Cys965/Cys977, Cys967/Cys983, Cys985/Cys994, and Cys997/Cys1010. Laminin EGF-like domains follow at residues 707-754 (CTCN…DCQP), 755-809 (CPCP…PCHQ), 810-865 (CQCS…KCMP), 866-916 (CSCH…GCRS), 917-964 (CKCH…GCRA), and 965-1013 (CRCS…CQQC). Asn837 carries an N-linked (GlcNAc...) asparagine glycan. An N-linked (GlcNAc...) asparagine glycan is attached at Asn980. A domain II and I region spans residues 1014–1575 (PSCYALVKEE…SLPENCASWQ (562 aa)). The Cell attachment site signature appears at 1059-1061 (RGD). Residues 1073-1134 (REAFLEQMMS…SEEEILHAAA (62 aa)) are a coiled coil. A glycan (N-linked (GlcNAc...) asparagine) is linked at Asn1185. The stretch at 1201–1228 (LETQRDLEDRYQEVQAAQKALRTAVAEV) forms a coiled coil. The disordered stretch occupies residues 1378 to 1399 (KQAERMLGNAAPLSSSAKKKGR). 2 coiled-coil regions span residues 1410–1492 (KLAK…LARL) and 1523–1567 (GSLQ…LHSL).

Laminin is a complex glycoprotein, consisting of three different polypeptide chains (alpha, beta, gamma), which are bound to each other by disulfide bonds into a cross-shaped molecule comprising one long and three short arms with globules at each end. Gamma-3 is a subunit of laminin-12 (laminin-213), laminin-14 (laminin-423) and laminin-15 (laminin-523). As to expression, broadly expressed in: skin, heart, lung, and the reproductive tracts.

Its subcellular location is the secreted. The protein localises to the extracellular space. It is found in the extracellular matrix. The protein resides in the basement membrane. Binding to cells via a high affinity receptor, laminin is thought to mediate the attachment, migration and organization of cells into tissues during embryonic development by interacting with other extracellular matrix components. The chain is Laminin subunit gamma-3 (LAMC3) from Homo sapiens (Human).